The chain runs to 789 residues: 1-phosphatidylinositol 4,5-bisphosphate phosphodiesterase delta-3 (789 aa).

The PH domain maps to 63-172 (RAMLRGSRLR…WVRGLTKLRA (110 aa)). A substrate binding region spans residues 73-101 (KIRSRTWHKERLYRLQEDGLSVWFQRRIP). Serine 105 carries the post-translational modification Phosphoserine. 3 consecutive EF-hand domains span residues 182 to 217 (RLDH…VNVD), 218 to 253 (MNDM…LLKR), and 250 to 285 (LLKR…QGEE). Residues aspartate 195, asparagine 197, aspartate 199, lysine 201, glutamate 206, aspartate 231, serine 233, asparagine 235, arginine 237, and glutamate 242 each coordinate Ca(2+). The region spanning 337–482 (QDMNQPLAHY…LKGRVLVKGK (146 aa)) is the PI-PLC X-box domain. Histidine 352 is an active-site residue. Asparagine 353, glutamate 382, and aspartate 384 together coordinate Ca(2+). Histidine 397 is an active-site residue. Glutamate 431 contacts Ca(2+). The tract at residues 461–519 (SPNPEELPSPEQLKGRVLVKGKKLPAARSEDGRALSDREEEEEDDEEEEEEVEAAAQRR) is disordered. Residues lysine 480 and lysine 482 each contribute to the substrate site. Basic and acidic residues predominate over residues 488–497 (RSEDGRALSD). Serine 496 is subject to Phosphoserine. The segment covering 498-513 (REEEEEDDEEEEEEVE) has biased composition (acidic residues). The region spanning 528 to 644 (LSALAVYCHA…GYVLKPACLR (117 aa)) is the PI-PLC Y-box domain. Serine 557 is a binding site for substrate. Serine 573 carries the phosphoserine modification. Arginine 584 serves as a coordination point for substrate. The 126-residue stretch at 644 to 769 (RQPDSTFDPE…QGYRHIHLLS (126 aa)) folds into the C2 domain. Residues isoleucine 683, aspartate 685, asparagine 709, aspartate 738, tyrosine 739, and aspartate 740 each contribute to the Ca(2+) site.

Ca(2+) serves as cofactor. As to expression, present in corneal epithelial cells (at protein level).

The protein resides in the membrane. The protein localises to the cytoplasm. Its subcellular location is the cleavage furrow. The catalysed reaction is a 1,2-diacyl-sn-glycero-3-phospho-(1D-myo-inositol-4,5-bisphosphate) + H2O = 1D-myo-inositol 1,4,5-trisphosphate + a 1,2-diacyl-sn-glycerol + H(+). Strongly activated by phosphatidic acid. Inhibited by phosphatidylethanolamine (PtdEtn), phosphatidylcholine (PtdCho), sphingomyelin and phosphatidylserine (PtdSer). Its function is as follows. Hydrolyzes the phosphatidylinositol 4,5-bisphosphate (PIP2) to generate 2 second messenger molecules diacylglycerol (DAG) and inositol 1,4,5-trisphosphate (IP3). DAG mediates the activation of protein kinase C (PKC), while IP3 releases Ca(2+) from intracellular stores. Essential for trophoblast and placental development. May participate in cytokinesis by hydrolyzing PIP2 at the cleavage furrow. Regulates neurite outgrowth through the inhibition of RhoA/Rho kinase signaling. This Homo sapiens (Human) protein is 1-phosphatidylinositol 4,5-bisphosphate phosphodiesterase delta-3.